The following is a 252-amino-acid chain: Ditrans,polycis-undecaprenyl-diphosphate synthase ((2E,6E)-farnesyl-diphosphate specific) (252 aa).

The active site involves Asp-25. Residue Asp-25 coordinates Mg(2+). Substrate contacts are provided by residues 26 to 29 (GNGR), Trp-30, Arg-38, His-42, and 70 to 72 (SSE). The Proton acceptor role is filled by Asn-73. Residues Trp-74, Arg-76, and Arg-193 each contribute to the substrate site. His-198 contributes to the Mg(2+) binding site. Residue 199–201 (RIS) coordinates substrate. Glu-212 provides a ligand contact to Mg(2+).

This sequence belongs to the UPP synthase family. As to quaternary structure, homodimer. Requires Mg(2+) as cofactor.

It catalyses the reaction 8 isopentenyl diphosphate + (2E,6E)-farnesyl diphosphate = di-trans,octa-cis-undecaprenyl diphosphate + 8 diphosphate. Catalyzes the sequential condensation of isopentenyl diphosphate (IPP) with (2E,6E)-farnesyl diphosphate (E,E-FPP) to yield (2Z,6Z,10Z,14Z,18Z,22Z,26Z,30Z,34E,38E)-undecaprenyl diphosphate (di-trans,octa-cis-UPP). UPP is the precursor of glycosyl carrier lipid in the biosynthesis of bacterial cell wall polysaccharide components such as peptidoglycan and lipopolysaccharide. In Salmonella paratyphi A (strain ATCC 9150 / SARB42), this protein is Ditrans,polycis-undecaprenyl-diphosphate synthase ((2E,6E)-farnesyl-diphosphate specific).